Here is a 492-residue protein sequence, read N- to C-terminus: Glutamyl-tRNA(Gln) amidotransferase subunit A, mitochondrial (492 aa).

Active-site charge relay system residues include Lys-78 and Ser-159. The active-site Acyl-ester intermediate is the Ser-183.

Belongs to the amidase family. GatA subfamily. In terms of assembly, subunit of the heterotrimeric GatCAB amidotransferase (AdT) complex, composed of A, B and C subunits.

It is found in the mitochondrion. The catalysed reaction is L-glutamyl-tRNA(Gln) + L-glutamine + ATP + H2O = L-glutaminyl-tRNA(Gln) + L-glutamate + ADP + phosphate + H(+). Its function is as follows. Allows the formation of correctly charged Gln-tRNA(Gln) through the transamidation of misacylated Glu-tRNA(Gln) in the mitochondria. The reaction takes place in the presence of glutamine and ATP through an activated gamma-phospho-Glu-tRNA(Gln). In Anopheles gambiae (African malaria mosquito), this protein is Glutamyl-tRNA(Gln) amidotransferase subunit A, mitochondrial.